A 33-amino-acid polypeptide reads, in one-letter code: Cysteine-rich venom protein tripurin (33 aa).

This sequence belongs to the CRISP family. In terms of processing, contains 8 disulfide bonds. As to expression, expressed by the venom gland.

Its subcellular location is the secreted. In terms of biological role, blocks contraction of smooth muscle elicited by high potassium-induced depolarization, but does not block caffeine-stimulated contraction. May target voltage-gated calcium channels on smooth muscle. The polypeptide is Cysteine-rich venom protein tripurin (Trimeresurus purpureomaculatus (Mangrove pit viper)).